The chain runs to 337 residues: Nucleoid-associated protein HS_0228 (337 aa).

Belongs to the YejK family.

Its subcellular location is the cytoplasm. It is found in the nucleoid. The chain is Nucleoid-associated protein HS_0228 from Histophilus somni (strain 129Pt) (Haemophilus somnus).